A 342-amino-acid chain; its full sequence is Ribosomal RNA small subunit methyltransferase C (342 aa).

It belongs to the methyltransferase superfamily. RsmC family. Monomer.

The protein localises to the cytoplasm. The enzyme catalyses guanosine(1207) in 16S rRNA + S-adenosyl-L-methionine = N(2)-methylguanosine(1207) in 16S rRNA + S-adenosyl-L-homocysteine + H(+). In terms of biological role, specifically methylates the guanine in position 1207 of 16S rRNA in the 30S particle. The sequence is that of Ribosomal RNA small subunit methyltransferase C from Citrobacter koseri (strain ATCC BAA-895 / CDC 4225-83 / SGSC4696).